The following is a 99-amino-acid chain: UPF0125 protein PM0166 (99 aa).

The protein belongs to the UPF0125 (RnfH) family.

The sequence is that of UPF0125 protein PM0166 from Pasteurella multocida (strain Pm70).